We begin with the raw amino-acid sequence, 217 residues long: FGFR1 oncogene partner 2 homolog (217 aa).

Coiled coils occupy residues threonine 6–tyrosine 106 and lysine 163–serine 188. A disordered region spans residues lysine 194–serine 217. Positions glutamate 199–serine 217 are enriched in polar residues.

It belongs to the SIKE family.

It is found in the cytoplasm. In Gallus gallus (Chicken), this protein is FGFR1 oncogene partner 2 homolog (FGFR1OP2).